Reading from the N-terminus, the 352-residue chain is Quinolinate synthase (352 aa).

His-48 and Ser-69 together coordinate iminosuccinate. Cys-114 contacts [4Fe-4S] cluster. Residues 140–142 (YAN) and Ser-157 contribute to the iminosuccinate site. [4Fe-4S] cluster is bound at residue Cys-201. Iminosuccinate-binding positions include 227–229 (HPE) and Thr-244. Cys-298 provides a ligand contact to [4Fe-4S] cluster.

Belongs to the quinolinate synthase family. Type 1 subfamily. The cofactor is [4Fe-4S] cluster.

Its subcellular location is the cytoplasm. The catalysed reaction is iminosuccinate + dihydroxyacetone phosphate = quinolinate + phosphate + 2 H2O + H(+). The protein operates within cofactor biosynthesis; NAD(+) biosynthesis; quinolinate from iminoaspartate: step 1/1. Catalyzes the condensation of iminoaspartate with dihydroxyacetone phosphate to form quinolinate. This chain is Quinolinate synthase, found in Pseudomonas syringae pv. syringae (strain B728a).